Here is a 199-residue protein sequence, read N- to C-terminus: 7-methyl-GTP pyrophosphatase (199 aa).

The active-site Proton acceptor is the Asp76.

The protein belongs to the Maf family. YceF subfamily. Requires a divalent metal cation as cofactor.

The protein localises to the cytoplasm. It carries out the reaction N(7)-methyl-GTP + H2O = N(7)-methyl-GMP + diphosphate + H(+). Nucleoside triphosphate pyrophosphatase that hydrolyzes 7-methyl-GTP (m(7)GTP). May have a dual role in cell division arrest and in preventing the incorporation of modified nucleotides into cellular nucleic acids. This chain is 7-methyl-GTP pyrophosphatase, found in Rhizobium etli (strain ATCC 51251 / DSM 11541 / JCM 21823 / NBRC 15573 / CFN 42).